The chain runs to 364 residues: Aminomethyltransferase (364 aa).

This sequence belongs to the GcvT family. The glycine cleavage system is composed of four proteins: P, T, L and H.

It catalyses the reaction N(6)-[(R)-S(8)-aminomethyldihydrolipoyl]-L-lysyl-[protein] + (6S)-5,6,7,8-tetrahydrofolate = N(6)-[(R)-dihydrolipoyl]-L-lysyl-[protein] + (6R)-5,10-methylene-5,6,7,8-tetrahydrofolate + NH4(+). Functionally, the glycine cleavage system catalyzes the degradation of glycine. The chain is Aminomethyltransferase from Proteus mirabilis (strain HI4320).